Reading from the N-terminus, the 314-residue chain is MNMVWTEISCEVPAAMVDLLADFLVELSGNGVSIENLSLDTFSLDTIEDSPLKTVKAYFAVDNALEAHLDAVGAFLSANGPDFAGFVFKNPAVNAIDAEDWANNWKKYFKPVRIGSRLVIKPTWEEYSASPGDLILKLDPGMAFGTGGHPTTKMCLEALEHIFLAEGAFKGVAPVAPVTVLDVGTGSGVLSIGAAKLGAERITAIDIDADAVVVAGENVALNECSDVVELSTTPLQELTGNFDLVLANILAEELVRLAAELAVKVAPAGFLVLSGILSEKENFVLDGFSPYGLKLIEIRREGEWSCISLYLEPR.

S-adenosyl-L-methionine contacts are provided by threonine 152, glycine 184, aspartate 206, and asparagine 248.

Belongs to the methyltransferase superfamily. PrmA family.

The protein localises to the cytoplasm. It carries out the reaction L-lysyl-[protein] + 3 S-adenosyl-L-methionine = N(6),N(6),N(6)-trimethyl-L-lysyl-[protein] + 3 S-adenosyl-L-homocysteine + 3 H(+). Its function is as follows. Methylates ribosomal protein L11. The chain is Ribosomal protein L11 methyltransferase from Geotalea daltonii (strain DSM 22248 / JCM 15807 / FRC-32) (Geobacter daltonii).